The following is a 323-amino-acid chain: uncharacterized protein (323 aa).

Helical transmembrane passes span 8–28, 32–52, and 92–112; these read FLVI…MFME, LTLL…PFSL, and ITIF…CGIF.

It is found in the mitochondrion membrane. This is an uncharacterized protein from Neurospora crassa (strain ATCC 24698 / 74-OR23-1A / CBS 708.71 / DSM 1257 / FGSC 987).